The following is a 415-amino-acid chain: SVF1-like protein YDR222W (415 aa).

Belongs to the SVF1 family.

It is found in the cytoplasm. The sequence is that of SVF1-like protein YDR222W from Saccharomyces cerevisiae (strain ATCC 204508 / S288c) (Baker's yeast).